A 349-amino-acid chain; its full sequence is PhoH-like protein (349 aa).

Position 147 to 154 (147 to 154 (GPAGTGKT)) interacts with ATP.

It belongs to the PhoH family.

The protein localises to the cytoplasm. This chain is PhoH-like protein, found in Mycobacterium leprae (strain TN).